Reading from the N-terminus, the 24-residue chain is MPGKVQDFFLCSLLLRIVSAGWCD.

This is Positive regulator of RepFIC repA1 expression (repL) from Escherichia coli.